Here is a 365-residue protein sequence, read N- to C-terminus: Hematopoietic SH2 domain-containing protein homolog (365 aa).

The 92-residue stretch at 34 to 125 (WFHGIISRKA…PYNELLTVAC (92 aa)) folds into the SH2 domain. 2 disordered regions span residues 199-278 (QSTD…QQKP) and 335-365 (AEHP…APGY). Positions 257 to 277 (QQITPNTPNEGRTQQKNQQQK) are enriched in polar residues.

In terms of biological role, may be an adapter protein involved in tyrosine kinase signaling. The chain is Hematopoietic SH2 domain-containing protein homolog (hsh2d) from Danio rerio (Zebrafish).